A 1092-amino-acid chain; its full sequence is Isoleucine--tRNA ligase (1092 aa).

The short motif at P53 to H63 is the 'HIGH' region element. A 'KMSKS' region motif is present at residues K613–R617. K616 contacts ATP.

It belongs to the class-I aminoacyl-tRNA synthetase family. IleS type 2 subfamily. Monomer. It depends on Zn(2+) as a cofactor.

The protein resides in the cytoplasm. It catalyses the reaction tRNA(Ile) + L-isoleucine + ATP = L-isoleucyl-tRNA(Ile) + AMP + diphosphate. Functionally, catalyzes the attachment of isoleucine to tRNA(Ile). As IleRS can inadvertently accommodate and process structurally similar amino acids such as valine, to avoid such errors it has two additional distinct tRNA(Ile)-dependent editing activities. One activity is designated as 'pretransfer' editing and involves the hydrolysis of activated Val-AMP. The other activity is designated 'posttransfer' editing and involves deacylation of mischarged Val-tRNA(Ile). The sequence is that of Isoleucine--tRNA ligase from Rickettsia conorii (strain ATCC VR-613 / Malish 7).